Consider the following 2505-residue polypeptide: MEEVVIAGMSGKLPESENLQEFWANLIGGVDMVTDDDRRWKAGLYGLPKRSGKLKDLSKFDASFFGVHPKQAHTMDPQLRLLLEVSYEAIVDGGINPASLRGTNTGVWVGVSGSEASEALSRDPETLLGYSMVGCQRAMMANRLSFFFDFKGPSIALDTACSSSLLALQNAYQAIRSGECPAAIVGGINLLLKPNTSVQFMKLGMLSPDGTCRSFDDSGNGYCRAEAVVAVLLTKKSLARRVYATILNAGTNTDGCKEQGVTFPSGEAQEQLIRSLYQPGGVAPESLEYIEAHGTGTKVGDPQELNGITRSLCAFRQSPLLIGSTKSNMGHPEPASGLAALTKVLLSLENGVWAPNLHFHNPNPEIPALLDGRLQVVDRPLPVRGGIVGINSFGFGGANVHVILQPNTQQAPAPAPHAALPHLLHASGRTMEAVQGLLEQGRQHSQDLAFVSMLNDIAATPTAAMPFRGYTVLGVEGHVQEVQQVPASQRPLWFICSGMGTQWRGMGLSLMRLDSFRESILRSDEALKPLGVKVSDLLLSTDEHTFDDIVHSFVSLTAIQIALIDLLTSMGLKPDGIIGHSLGEVACGYADGCLSQREAVLAAYWRGQCIKDANLPAGSMAAVGLSWEECKQRCPPGVVPACHNSEDTVTISGPQAAVNEFVEQLKQEGVFAKEVRTGGLAFHSYFMEGIAPTLLQALKKVIREPRPRSARWLSTSIPEAQWQSSLARTSSAEYNVNNLVSPVLFQEALWHVPEHAVVLEIAPHALLQAVLKRGVKPSCTIIPLMKRDHKDNLEFFLTNLGKVHLTGIDINPNALFPPVEFPVPRGTPLISPHIKWDHSQTWDIPVAEDFPNGSSSSSATVYNIDASSESSDHYLVDHCIDGRVLFPGTGYLYLVWKTLARSLSLSLEETPVVFENVTFHQATILPRTGTVPLEVRLLEASHAFEVSDSGNLIVSGKVYQWEDPDSKLFDHPEVPIPAESESVSRLTQGEVYKELRLRGYDYGPHFQGVYEATLEGEQGKLLWKDNWVTFMDTMLQISILGFSKQSLQLPTRVTAIYIDPATHLQKVYMLEGDTQVADVTTSRCLGVTVSGGVYISRLQTTATSRRQQEQLVPTLEKFVFTPHVEPECLSESAILQKELQLCKGLAKALQTKATQQGLKMTVPGLEDLPQHGLPRLLAAACQLQLNGNLQLELGEVLARERLLLPEDPLISGLLNSQALKACIDTALENLSTLKMKVVEVLAGEGHLYSHISALLNTQPMLQLEYTATDRHPQALKDVQTKLQQHDVAQGQWDPSGPAPTNLGALDLVVCNCALATLGDPALALDNMVAALKDGGFLLMHTVLKGHALGETLACLPSEVQPGPSFLSQEEWESLFSRKALHLVGLKKSFYGTALFLCRRLSPQDKPIFLPVEDTSFQWVDSLKSILATSSSQPVWLTAMNCPTSGVVGLVNCLRKEPGGHRIRCILLSNLSSTSHVPKLDPGSSELQKVLESDLVMNVYRDGAWGAFRHFQLEQDKPEEQTAHAFVNVLTRGDLASIRWVSSPLKHMQPPSSSGAQLCTVYYASLNFRDIMLATGKLSPDAIPGKWASRDCMLGMEFSGRDKCGRRVMGLVPAEGLATSVLLSPDFLWDVPSSWTLEEAASVPVVYTTAYYSLVVRGRIQHGETVLIHSGSGGVGQAAISIALSLGCRVFTTVGSAEKRAYLQARFPQLDDTSFANSRDTSFEQHVLLHTGGKGVDLVLNSLAEEKLQASVRCLAQHGRFLEIGKFDLSNNHPLGMAIFLKNVTFHGILLDALFEGANDSWREVAELLKAGIRDGVVKPLKCTVFPKAQVEDAFRYMAQGKHIGKVLVQVREEEPEAMLPGAQPTLISAISKTFCPEHKSYIITGGLGGFGLELARWLVLRGAQRLVLTSRSGIRTGYQAKHVREWRRQGIHVLVSTSNVSSLEGARALIAEATKLGPVGGVFNLAMVLRDAMLENQTPELFQDVNKPKYNGTLNLDRATREACPELDYFVAFSSVSCGRGNAGQSNYGFANSTMERICEQRRHDGLPGLAVQWGAIGDVGIILEAMGTNDTVVGGTLPQRISSCMEVLDLFLNQPHAVLSSFVLAEKKAVAHGDGEAQRDLVKAVAHILGIRDLAGINLDSSLADLGLDSLMGVEVRQILEREHDLVLPIREVRQLTLRKLQEMSSKAGSDTELAAPKSKNDTSLKQAQLNLSILLVNPEGPTLTRLNSVQSSERPLFLVHPIEGSITVFHSLAAKLSVPTYGLQCTQAAPLDSIPNLAAYYIDCIKQVQPEGPYRVAGYSFGACVAFEMCSQLQAQQGPAPAHNNLFLFDGSHTYVLAYTQSYRAKLTPGCEAEAEAEAICFFIKQFVDAEHSKVLEALLPLKSLEDRVAAAVDLITRSHQSLDRRDLSFAAVSFYYKLRAADQYKPKAKYHGNVILLRAKTGGTYGEDLGADYNLSQVCDGKVSVHIIEGDHRTLLEGRGLESIINIIHSSLAEPRVSVREG.

Methionine 1 bears the N-acetylmethionine mark. Residues 1 to 406 (MEEVVIAGMS…GANVHVILQP (406 aa)) form the Ketosynthase family 3 (KS3) domain. Residue lysine 59 is modified to N6-acetyllysine. Serine 63 is modified (phosphoserine). Lysine 70 bears the N6-acetyllysine mark. Catalysis depends on cysteine 161, which acts as the For beta-ketoacyl synthase activity. The residue at position 207 (serine 207) is a Phosphoserine. Histidine 293 functions as the For beta-ketoacyl synthase activity in the catalytic mechanism. Lysine 298 is modified (N6-acetyllysine). The active-site For beta-ketoacyl synthase activity is the histidine 331. An acyl and malonyl transferases region spans residues 429–817 (RTMEAVQGLL…IDINPNALFP (389 aa)). Residue lysine 528 is modified to N6-acetyllysine. Serine 581 serves as the catalytic For malonyltransferase activity. Residues 647-648 (DT) and phenylalanine 671 each bind an acyl-CoA. N6-acetyllysine is present on lysine 673. Serine 725 carries the phosphoserine modification. Position 773 (arginine 773) interacts with an acyl-CoA. N6-acetyllysine is present on lysine 790. Residues 844-966 (IPVAEDFPNG…KVYQWEDPDS (123 aa)) are N-terminal hotdog fold. A PKS/mFAS DH domain is found at 844-1112 (IPVAEDFPNG…TSRRQQEQLV (269 aa)). Histidine 878 acts as the Proton acceptor; for dehydratase activity in catalysis. Residues 983-1112 (VSRLTQGEVY…TSRRQQEQLV (130 aa)) form a C-terminal hotdog fold region. Lysine 993 bears the N6-acetyllysine mark. Aspartate 1032 (proton donor; for dehydratase activity) is an active-site residue. Lysine 1276 is modified (N6-acetyllysine). At cysteine 1464 the chain carries S-nitrosocysteine. Phosphoserine is present on residues serine 1578 and serine 1588. The segment at 1629–1857 (DVPSSWTLEE…VQVREEEPEA (229 aa)) is enoyl reductase. 1665-1682 (VLIHSGSGGVGQAAISIA) lines the NADP(+) pocket. The residue at position 1698 (lysine 1698) is an N6-(pyridoxal phosphate)lysine; alternate. Position 1698 is an N6-acetyllysine; alternate (lysine 1698). N6-acetyllysine occurs at positions 1765, 1841, and 1989. Residue 1765 to 1780 (KFDLSNNHPLGMAIFL) participates in NADP(+) binding. Positions 1858 to 2113 (MLPGAQPTLI…VLAEKKAVAH (256 aa)) are beta-ketoacyl reductase. Cysteine 2085 is subject to S-nitrosocysteine. Residues 2113 to 2193 (HGDGEAQRDL…EMSSKAGSDT (81 aa)) enclose the Carrier domain. Serine 2151 bears the O-(pantetheine 4'-phosphoryl)serine; alternate mark. Serine 2151 is subject to Phosphoserine; alternate. 2 positions are modified to phosphoserine: serine 2191 and serine 2230. The tract at residues 2202 to 2505 (NDTSLKQAQL…AEPRVSVREG (304 aa)) is thioesterase. Serine 2302 serves as the catalytic For thioesterase activity. Residue lysine 2385 is modified to N6-acetyllysine. Residue lysine 2443 forms a Glycyl lysine isopeptide (Lys-Gly) (interchain with G-Cter in SUMO2) linkage. Histidine 2475 (for thioesterase activity) is an active-site residue.

In terms of assembly, homodimer which is arranged in a head to tail fashion. Interacts with CEACAM1; this interaction is insulin and phosphorylation-dependent; reduces fatty-acid synthase activity. In terms of processing, S-nitrosylation of Fatty acid synthase at cysteine residues Cys-1464 or Cys-2085 is important for the enzyme dimerization. In adipocytes, S-nitrosylation of Fatty acid synthase occurs under physiological conditions and gradually increases during adipogenesis.

It is found in the cytoplasm. It localises to the melanosome. The catalysed reaction is acetyl-CoA + n malonyl-CoA + 2n NADPH + 2n H(+) = a long-chain fatty acid + (n+1) CoA + n CO2 + 2n NADP(+).. It catalyses the reaction holo-[ACP] + acetyl-CoA = acetyl-[ACP] + CoA. The enzyme catalyses holo-[ACP] + malonyl-CoA = malonyl-[ACP] + CoA. It carries out the reaction a fatty acyl-[ACP] + malonyl-[ACP] + H(+) = a 3-oxoacyl-[ACP] + holo-[ACP] + CO2. The catalysed reaction is a (3R)-hydroxyacyl-[ACP] + NADP(+) = a 3-oxoacyl-[ACP] + NADPH + H(+). It catalyses the reaction a (3R)-hydroxyacyl-[ACP] = a (2E)-enoyl-[ACP] + H2O. The enzyme catalyses a 2,3-saturated acyl-[ACP] + NADP(+) = a (2E)-enoyl-[ACP] + NADPH + H(+). It carries out the reaction hexadecanoyl-[ACP] + H2O = hexadecanoate + holo-[ACP] + H(+). The catalysed reaction is acetyl-[ACP] + malonyl-[ACP] + H(+) = 3-oxobutanoyl-[ACP] + holo-[ACP] + CO2. It catalyses the reaction 3-oxobutanoyl-[ACP] + NADPH + H(+) = (3R)-hydroxybutanoyl-[ACP] + NADP(+). The enzyme catalyses (3R)-hydroxybutanoyl-[ACP] = (2E)-butenoyl-[ACP] + H2O. It carries out the reaction (2E)-butenoyl-[ACP] + NADPH + H(+) = butanoyl-[ACP] + NADP(+). The catalysed reaction is butanoyl-[ACP] + malonyl-[ACP] + H(+) = 3-oxohexanoyl-[ACP] + holo-[ACP] + CO2. It catalyses the reaction 3-oxohexanoyl-[ACP] + NADPH + H(+) = (3R)-hydroxyhexanoyl-[ACP] + NADP(+). The enzyme catalyses (3R)-hydroxyhexanoyl-[ACP] = (2E)-hexenoyl-[ACP] + H2O. It carries out the reaction (2E)-hexenoyl-[ACP] + NADPH + H(+) = hexanoyl-[ACP] + NADP(+). The catalysed reaction is hexanoyl-[ACP] + malonyl-[ACP] + H(+) = 3-oxooctanoyl-[ACP] + holo-[ACP] + CO2. It catalyses the reaction 3-oxooctanoyl-[ACP] + NADPH + H(+) = (3R)-hydroxyoctanoyl-[ACP] + NADP(+). The enzyme catalyses (3R)-hydroxyoctanoyl-[ACP] = (2E)-octenoyl-[ACP] + H2O. It carries out the reaction (2E)-octenoyl-[ACP] + NADPH + H(+) = octanoyl-[ACP] + NADP(+). The catalysed reaction is octanoyl-[ACP] + malonyl-[ACP] + H(+) = 3-oxodecanoyl-[ACP] + holo-[ACP] + CO2. It catalyses the reaction 3-oxodecanoyl-[ACP] + NADPH + H(+) = (3R)-hydroxydecanoyl-[ACP] + NADP(+). The enzyme catalyses (3R)-hydroxydecanoyl-[ACP] = (2E)-decenoyl-[ACP] + H2O. It carries out the reaction (2E)-decenoyl-[ACP] + NADPH + H(+) = decanoyl-[ACP] + NADP(+). The catalysed reaction is decanoyl-[ACP] + malonyl-[ACP] + H(+) = 3-oxododecanoyl-[ACP] + holo-[ACP] + CO2. It catalyses the reaction 3-oxododecanoyl-[ACP] + NADPH + H(+) = (3R)-hydroxydodecanoyl-[ACP] + NADP(+). The enzyme catalyses (3R)-hydroxydodecanoyl-[ACP] = (2E)-dodecenoyl-[ACP] + H2O. It carries out the reaction (2E)-dodecenoyl-[ACP] + NADPH + H(+) = dodecanoyl-[ACP] + NADP(+). The catalysed reaction is dodecanoyl-[ACP] + malonyl-[ACP] + H(+) = 3-oxotetradecanoyl-[ACP] + holo-[ACP] + CO2. It catalyses the reaction 3-oxotetradecanoyl-[ACP] + NADPH + H(+) = (3R)-hydroxytetradecanoyl-[ACP] + NADP(+). The enzyme catalyses (3R)-hydroxytetradecanoyl-[ACP] = (2E)-tetradecenoyl-[ACP] + H2O. It carries out the reaction (2E)-tetradecenoyl-[ACP] + NADPH + H(+) = tetradecanoyl-[ACP] + NADP(+). The catalysed reaction is tetradecanoyl-[ACP] + malonyl-[ACP] + H(+) = 3-oxohexadecanoyl-[ACP] + holo-[ACP] + CO2. It catalyses the reaction 3-oxohexadecanoyl-[ACP] + NADPH + H(+) = (3R)-hydroxyhexadecanoyl-[ACP] + NADP(+). The enzyme catalyses (3R)-hydroxyhexadecanoyl-[ACP] = (2E)-hexadecenoyl-[ACP] + H2O. It carries out the reaction (2E)-hexadecenoyl-[ACP] + NADPH + H(+) = hexadecanoyl-[ACP] + NADP(+). The catalysed reaction is hexadecanoyl-[ACP] + malonyl-[ACP] + H(+) = 3-oxooctadecanoyl-[ACP] + holo-[ACP] + CO2. It catalyses the reaction 3-oxooctadecanoyl-[ACP] + NADPH + H(+) = (3R)-hydroxyoctadecanoyl-[ACP] + NADP(+). The enzyme catalyses (3R)-hydroxyoctadecanoyl-[ACP] = (2E)-octadecenoyl-[ACP] + H2O. It carries out the reaction (2E)-octadecenoyl-[ACP] + NADPH + H(+) = octadecanoyl-[ACP] + NADP(+). The catalysed reaction is tetradecanoyl-[ACP] + H2O = tetradecanoate + holo-[ACP] + H(+). It catalyses the reaction octadecanoyl-[ACP] + H2O = octadecanoate + holo-[ACP] + H(+). It participates in lipid metabolism; fatty acid biosynthesis. Cerulenin, a potent non-competitive pharmacological inhibitor of FAS, binds covalently to the active site of the condensing enzyme region, inactivating a key enzyme step in fatty acid synthesis. Another inhibitor, though less efficient, is C75, a member of the alpha-methylene-gamma-butyrolactone chemical class, also proposed as an antitumour and anti-obesity agent. Functionally, fatty acid synthetase is a multifunctional enzyme that catalyzes the de novo biosynthesis of long-chain saturated fatty acids starting from acetyl-CoA and malonyl-CoA in the presence of NADPH. This multifunctional protein contains 7 catalytic activities and a site for the binding of the prosthetic group 4'-phosphopantetheine of the acyl carrier protein ([ACP]) domain. The sequence is that of Fatty acid synthase (Fasn) from Rattus norvegicus (Rat).